A 426-amino-acid polypeptide reads, in one-letter code: Elongation factor 1-alpha (426 aa).

Residues 5 to 221 enclose the tr-type G domain; it reads KPHMNLAVIG…DTFKEPDKPT (217 aa). The segment at 14–21 is G1; the sequence is GHIDHGKS. Residue 14–21 participates in GTP binding; sequence GHIDHGKS. Mg(2+) is bound at residue S21. Residues 70 to 74 are G2; that stretch reads GITID. A G3 region spans residues 91–94; the sequence is DCPG. Residues 91–95 and 146–149 each bind GTP; these read DCPGH and NKMD. Residues 146-149 form a G4 region; it reads NKMD. The segment at 185-187 is G5; the sequence is SSF.

Belongs to the TRAFAC class translation factor GTPase superfamily. Classic translation factor GTPase family. EF-Tu/EF-1A subfamily.

It is found in the cytoplasm. It carries out the reaction GTP + H2O = GDP + phosphate + H(+). In terms of biological role, GTP hydrolase that promotes the GTP-dependent binding of aminoacyl-tRNA to the A-site of ribosomes during protein biosynthesis. This chain is Elongation factor 1-alpha, found in Methanosphaerula palustris (strain ATCC BAA-1556 / DSM 19958 / E1-9c).